Here is a 593-residue protein sequence, read N- to C-terminus: F-box/LRR-repeat protein 17 (593 aa).

The F-box domain occupies 120-177 (DLDLQLDTDIVQPGRFHAVGLWEVLKRLPPSSLLMAARVCKGWRETSRKMWKAAEELR). LRR repeat units follow at residues 178-206 (IRVP…SLKI), 207-232 (ESDF…EITT), 237-262 (VNRI…KMEG), 276-304 (LSTL…SLEF), 335-361 (SLKL…SLVL), 362-387 (GINI…DLSG), 414-439 (CPNI…DCGM), 477-502 (LSLW…NLNL), and 503-525 (CSNL…YASG).

As to quaternary structure, part of a SCF (ASK-cullin-F-box) protein ligase complex. Interacts with SKP1A/ASK1, KRP4, KRP6 and KRP7. Expressed in developing pollen.

It localises to the nucleus. Its pathway is protein modification; protein ubiquitination. Its function is as follows. Essential protein for male fertility. Component of the SCF(ASK-cullin-F-box) E3 ubiquitin ligase complex SCF(FBL17), which mediates the ubiquitination and subsequent proteasomal degradation of target proteins. Enables the switch in cell cycle control leading to male germ cell lineage formation from microspores after meiosis. Targets CDKA-1 inhibitors the degradation specifically in male germ cells (e.g. KRP6 and KRP7) and thus enables CDKA-1 activation and germ cell S-phase progression. Promotes twin sperm cell production and double fertilization. The polypeptide is F-box/LRR-repeat protein 17 (FBL17) (Arabidopsis thaliana (Mouse-ear cress)).